The primary structure comprises 492 residues: Ketol-acid reductoisomerase (NADP(+)) (492 aa).

Residues 15-208 (AQLGKCRFMA…GAHRAGVLES (194 aa)) enclose the KARI N-terminal Rossmann domain. Residues 45 to 48 (CGAQ), R68, R76, S78, and 108 to 110 (DKQ) contribute to the NADP(+) site. The active site involves H132. G158 contacts NADP(+). 2 KARI C-terminal knotted domains span residues 209 to 344 (SFVA…NSPE) and 345 to 485 (YDGK…MTDM). Mg(2+) is bound by residues D217, E221, E389, and E393. S414 is a binding site for substrate.

This sequence belongs to the ketol-acid reductoisomerase family. The cofactor is Mg(2+).

It catalyses the reaction (2R)-2,3-dihydroxy-3-methylbutanoate + NADP(+) = (2S)-2-acetolactate + NADPH + H(+). The enzyme catalyses (2R,3R)-2,3-dihydroxy-3-methylpentanoate + NADP(+) = (S)-2-ethyl-2-hydroxy-3-oxobutanoate + NADPH + H(+). The protein operates within amino-acid biosynthesis; L-isoleucine biosynthesis; L-isoleucine from 2-oxobutanoate: step 2/4. It participates in amino-acid biosynthesis; L-valine biosynthesis; L-valine from pyruvate: step 2/4. Involved in the biosynthesis of branched-chain amino acids (BCAA). Catalyzes an alkyl-migration followed by a ketol-acid reduction of (S)-2-acetolactate (S2AL) to yield (R)-2,3-dihydroxy-isovalerate. In the isomerase reaction, S2AL is rearranged via a Mg-dependent methyl migration to produce 3-hydroxy-3-methyl-2-ketobutyrate (HMKB). In the reductase reaction, this 2-ketoacid undergoes a metal-dependent reduction by NADPH to yield (R)-2,3-dihydroxy-isovalerate. The polypeptide is Ketol-acid reductoisomerase (NADP(+)) (Photorhabdus laumondii subsp. laumondii (strain DSM 15139 / CIP 105565 / TT01) (Photorhabdus luminescens subsp. laumondii)).